The primary structure comprises 306 residues: HORMA domain-containing protein 2 (306 aa).

The region spanning 29-232 (HESLIMVKKL…TGFHSMKVKV (204 aa)) is the HORMA domain.

Interacts with HORMAD1. Post-translationally, phosphorylated in a SPO11-dependent manner.

Its subcellular location is the nucleus. The protein localises to the chromosome. Functionally, essential for synapsis surveillance during meiotic prophase via the recruitment of ATR activity. Plays a key role in the male mid-pachytene checkpoint and the female meiotic prophase checkpoint: required for efficient build-up of ATR activity on unsynapsed chromosome regions, a process believed to form the basis of meiotic silencing of unsynapsed chromatin (MSUC) and meiotic prophase quality control in both sexes. Required for the DNA double-strand break-independent, BRCA1-dependent activation of ATR on the sex chromosomes that is essential for normal sex body formation. The chain is HORMA domain-containing protein 2 (HORMAD2) from Bos taurus (Bovine).